Here is a 567-residue protein sequence, read N- to C-terminus: UPF0313 protein Tpet_0582 (567 aa).

The Radical SAM core domain maps to 288 to 560 (KAIETVKFSI…NKMKENVLFK (273 aa)). The [4Fe-4S] cluster site is built by Cys-303, Cys-307, and Cys-310.

It belongs to the UPF0313 family. The cofactor is [4Fe-4S] cluster.

The chain is UPF0313 protein Tpet_0582 from Thermotoga petrophila (strain ATCC BAA-488 / DSM 13995 / JCM 10881 / RKU-1).